A 190-amino-acid chain; its full sequence is Threonylcarbamoyl-AMP synthase (190 aa).

Residues 7–190 enclose the YrdC-like domain; the sequence is GDAIAAAIDV…ALTGELFRQG (184 aa).

Belongs to the SUA5 family. TsaC subfamily.

The protein localises to the cytoplasm. The catalysed reaction is L-threonine + hydrogencarbonate + ATP = L-threonylcarbamoyladenylate + diphosphate + H2O. Required for the formation of a threonylcarbamoyl group on adenosine at position 37 (t(6)A37) in tRNAs that read codons beginning with adenine. Catalyzes the conversion of L-threonine, HCO(3)(-)/CO(2) and ATP to give threonylcarbamoyl-AMP (TC-AMP) as the acyladenylate intermediate, with the release of diphosphate. The chain is Threonylcarbamoyl-AMP synthase from Shigella flexneri.